Here is a 1114-residue protein sequence, read N- to C-terminus: Filamentous growth regulator 23 (1114 aa).

The N-terminal stretch at 1-21 is a signal peptide; it reads MFASYLLLVLWIIRLVPTTHA. 2 disordered regions span residues 232-256 and 284-314; these read GSET…PSTT and SSSI…TSSS. The span at 240–252 shows a compositional bias: pro residues; that stretch reads TTAPKPVETPSPE. 11 N-linked (GlcNAc...) asparagine glycosylation sites follow: N382, N397, N475, N490, N506, N539, N565, N591, N637, N687, and N739. The tract at residues 392-430 is disordered; it reads SETTTNESSSYTDEPSSSEEITNTYEPSSSTESSTTDQF. Positions 764-784 are disordered; that stretch reads TSTLTSSHTSDNEKPASLSSS. The N-linked (GlcNAc...) asparagine glycan is linked to N831. Composition is skewed to low complexity over residues 844–910 and 922–941; these read SASS…SSSS and SSSV…ESSS. The interval 844 to 963 is disordered; that stretch reads SASSSYHSSE…ANENTSEITT (120 aa). The span at 942–963 shows a compositional bias: polar residues; sequence NGLVSTVTESSTANENTSEITT. N957, N966, and N1070 each carry an N-linked (GlcNAc...) asparagine glycan. The GPI-anchor amidated asparagine moiety is linked to residue N1089. Positions 1090-1114 are cleaved as a propeptide — removed in mature form; it reads ANSLGLKNGDNSWIIGIMMIGLLMI.

The protein localises to the cell membrane. In terms of biological role, putative adhesin which may be involved in cell adhesion and virulence. Involved in the regulation of filamentous growth. This is Filamentous growth regulator 23 (FGR23) from Candida albicans (strain SC5314 / ATCC MYA-2876) (Yeast).